Consider the following 289-residue polypeptide: ATP synthase gamma chain (289 aa).

This sequence belongs to the ATPase gamma chain family. In terms of assembly, F-type ATPases have 2 components, CF(1) - the catalytic core - and CF(0) - the membrane proton channel. CF(1) has five subunits: alpha(3), beta(3), gamma(1), delta(1), epsilon(1). CF(0) has three main subunits: a, b and c.

The protein resides in the cell inner membrane. In terms of biological role, produces ATP from ADP in the presence of a proton gradient across the membrane. The gamma chain is believed to be important in regulating ATPase activity and the flow of protons through the CF(0) complex. The protein is ATP synthase gamma chain of Halorhodospira halophila (strain DSM 244 / SL1) (Ectothiorhodospira halophila (strain DSM 244 / SL1)).